Reading from the N-terminus, the 150-residue chain is MAPKAEKKPAEKKPAEEKAGEKAPAAGKKPKAEKRLPASKGEKGGEGKKERGRKKAKKSVETYKIYIFKVLKQVHPDIGISSKAMSIMNSFINDIFEKLAGEAAKLARYNKKPTITSREIQTSVRLVLPGELAKHAVSEGTKAVTKFTSS.

2 stretches are compositionally biased toward basic and acidic residues: residues M1–E21 and E33–K49. The interval M1 to K58 is disordered. Residues K7 and K34 each carry the N6-acetyllysine modification. A Glycyl lysine isopeptide (Lys-Gly) (interchain with G-Cter in ubiquitin) cross-link involves residue K146.

This sequence belongs to the histone H2B family. As to quaternary structure, the nucleosome is a histone octamer containing two molecules each of H2A, H2B, H3 and H4 assembled in one H3-H4 heterotetramer and two H2A-H2B heterodimers. The octamer wraps approximately 147 bp of DNA. Can be acetylated to form H2BK6ac and H2BK33ac. Post-translationally, monoubiquitinated by BRE1 to form H2BK143ub1 and deubiquitinated by UBP26. Required for heterochromatic histone H3 di- and trimethylation at H3K4me. May give a specific tag for epigenetic transcriptional activation.

The protein localises to the nucleus. It localises to the chromosome. Functionally, core component of nucleosome. Nucleosomes wrap and compact DNA into chromatin, limiting DNA accessibility to the cellular machineries which require DNA as a template. Histones thereby play a central role in transcription regulation, DNA repair, DNA replication and chromosomal stability. DNA accessibility is regulated via a complex set of post-translational modifications of histones, also called histone code, and nucleosome remodeling. The sequence is that of Histone H2B.2 (H2B.2) from Oryza sativa subsp. indica (Rice).